The following is a 190-amino-acid chain: Elongation factor P-like protein (190 aa).

The protein belongs to the elongation factor P family.

This is Elongation factor P-like protein from Psychromonas ingrahamii (strain DSM 17664 / CCUG 51855 / 37).